The primary structure comprises 116 residues: Alpha-amylase inhibitor 5 (116 aa).

5 cysteine pairs are disulfide-bonded: cysteine 4/cysteine 55, cysteine 18/cysteine 44, cysteine 27/cysteine 77, cysteine 45/cysteine 95, and cysteine 57/cysteine 106.

This sequence belongs to the protease inhibitor I6 (cereal trypsin/alpha-amylase inhibitor) family.

The protein resides in the secreted. Functionally, alpha-amylase inhibitor. The sequence is that of Alpha-amylase inhibitor 5 from Sorghum bicolor (Sorghum).